Consider the following 628-residue polypeptide: Junctophilin-4 (628 aa).

At 1–606 the chain is on the cytoplasmic side; sequence MSPGGKFDFD…RPAQPGAANP (606 aa). 6 MORN repeats span residues 50-72, 74-95, 96-117, 118-140, 141-163, and 164-186; these read LGVF…KREG, GVER…KGRS, GVWE…FQDG, YGTE…KRHG, YGVR…RTSL, and DSGH…EGGS. Disordered regions lie at residues 158-214 and 231-276; these read PRRT…RTPA and GGRR…LIEG. Residues 170-179 are compositionally biased toward pro residues; sequence PPTPPPPLPL. Composition is skewed to low complexity over residues 231–241 and 253–272; these read GGRRSSLGSKR and GSTG…APPA. MORN repeat units lie at residues 317–339 and 340–362; these read YGRT…RLVH and GGRV…KVDR. The disordered stretch occupies residues 415-602; that stretch reads DLQPMLEAPG…AATERPAQPG (188 aa). Residues 432 to 443 show a composition bias toward acidic residues; the sequence is EGSDTEPLDEDS. Composition is skewed to low complexity over residues 453–467 and 528–541; these read PSEG…PASS and GSPL…SSGS. Residues 607 to 628 form a helical; Anchor for type IV membrane protein membrane-spanning segment; sequence LVVGAVALLDLSLAFLFSQLLT.

Belongs to the junctophilin family.

It is found in the cell membrane. The protein localises to the endoplasmic reticulum membrane. Its function is as follows. Junctophilins contribute to the formation of junctional membrane complexes (JMCs) which link the plasma membrane with the endoplasmic or sarcoplasmic reticulum in excitable cells. Provides a structural foundation for functional cross-talk between the cell surface and intracellular calcium release channels. JPH4 is brain-specific and appears to have an active role in certain neurons involved in motor coordination and memory. The protein is Junctophilin-4 (JPH4) of Homo sapiens (Human).